We begin with the raw amino-acid sequence, 111 residues long: MKDPYDVIKRHYVTEKAKTLEGLSLGNGEGKKKGSYCKHPKYTFIVDSNATKPLIAQALESIYADKKVKVKSVNTICVKPQPARMFRGKRKGKTAGFKKAVVTFYEGHSIG.

This sequence belongs to the universal ribosomal protein uL23 family. As to quaternary structure, part of the 50S ribosomal subunit. Contacts protein L29, and trigger factor when it is bound to the ribosome.

One of the early assembly proteins it binds 23S rRNA. One of the proteins that surrounds the polypeptide exit tunnel on the outside of the ribosome. Forms the main docking site for trigger factor binding to the ribosome. The protein is Large ribosomal subunit protein uL23 of Chlamydia abortus (strain DSM 27085 / S26/3) (Chlamydophila abortus).